The following is a 511-amino-acid chain: Potassium voltage-gated channel subfamily A member 10 (511 aa).

The segment at 25–44 (EPGYATDFDPTSSKGRPGSS) is disordered. Residues 218–238 (VAVVSVLVVVISITIFCLETL) form a helical membrane-spanning segment. Residues 271 to 292 (FFMVESTCIVWFTFELVLRFVV) traverse the membrane as a helical segment. The S-palmitoyl cysteine moiety is linked to residue Cys-293. The helical transmembrane segment at 303 to 323 (IMNIIDIISIIPYFATLITEL) threads the bilayer. Residues 339 to 358 (ILRIIRLVRVFRIFKLSRHS) form a helical; Voltage-sensor membrane-spanning segment. A helical membrane pass occupies residues 375–395 (LGLLIFFLFIGVILFSSAVYF). The Selectivity filter signature appears at 421–426 (TVGYGD). Residues 436-456 (IVGTLCAIAGVLTIALPVPVI) traverse the membrane as a helical segment. Positions 489–511 (SRMGSTESLNKTNGSCSAEKSRK) are disordered.

It belongs to the potassium channel family. A (Shaker) (TC 1.A.1.2) subfamily. Kv1.8/KCNA10 sub-subfamily. In terms of assembly, homotetramer. Interacts with KCN4B/POMP. Interaction with KCN4B/POMP is necessary for the modulation of channel activity by cAMP. Expressed strongly in the inner ear and weakly in skeletal muscle. Not detected in other tissues.

The protein localises to the membrane. It carries out the reaction K(+)(in) = K(+)(out). The channel activity is up-regulated by cAMP. Functionally, voltage-gated potassium ion channel that mediates K(+) permeability of excitable membranes. When opened in response to the voltage difference across the membrane, KCNA10 channel selectively allows the flow of potassium ions across the membrane down their electrochemical gradient. This Mus musculus (Mouse) protein is Potassium voltage-gated channel subfamily A member 10.